The chain runs to 247 residues: Geranylgeranylglyceryl phosphate synthase (247 aa).

The Mg(2+) site is built by aspartate 23 and serine 52. Sn-glycerol 1-phosphate contacts are provided by residues tyrosine 171–glycine 177, glycine 203–glycine 204, and glycine 225–threonine 226.

This sequence belongs to the GGGP/HepGP synthase family. Group II subfamily. Requires Mg(2+) as cofactor.

The protein localises to the cytoplasm. The enzyme catalyses sn-glycerol 1-phosphate + (2E,6E,10E)-geranylgeranyl diphosphate = sn-3-O-(geranylgeranyl)glycerol 1-phosphate + diphosphate. The protein operates within membrane lipid metabolism; glycerophospholipid metabolism. Functionally, prenyltransferase that catalyzes the transfer of the geranylgeranyl moiety of geranylgeranyl diphosphate (GGPP) to the C3 hydroxyl of sn-glycerol-1-phosphate (G1P). This reaction is the first ether-bond-formation step in the biosynthesis of archaeal membrane lipids. The protein is Geranylgeranylglyceryl phosphate synthase of Methanosarcina barkeri (strain Fusaro / DSM 804).